The sequence spans 554 residues: Phenylalanine--tRNA ligase beta subunit (554 aa).

The B5 domain occupies Leu-276–Gly-351. Positions 329, 335, 338, and 339 each coordinate Mg(2+).

The protein belongs to the phenylalanyl-tRNA synthetase beta subunit family. Type 2 subfamily. In terms of assembly, tetramer of two alpha and two beta subunits. Mg(2+) is required as a cofactor.

Its subcellular location is the cytoplasm. It carries out the reaction tRNA(Phe) + L-phenylalanine + ATP = L-phenylalanyl-tRNA(Phe) + AMP + diphosphate + H(+). The sequence is that of Phenylalanine--tRNA ligase beta subunit from Methanococcus maripaludis (strain C5 / ATCC BAA-1333).